Reading from the N-terminus, the 209-residue chain is High frequency lysogenization protein HflD homolog (209 aa).

The protein belongs to the HflD family.

It localises to the cytoplasm. It is found in the cell inner membrane. This Halorhodospira halophila (strain DSM 244 / SL1) (Ectothiorhodospira halophila (strain DSM 244 / SL1)) protein is High frequency lysogenization protein HflD homolog.